Reading from the N-terminus, the 204-residue chain is Synaptosomal-associated protein 25-A (204 aa).

Over residues 1–11 (MAEDADMRNEL) the composition is skewed to basic and acidic residues. Residues 1-25 (MAEDADMRNELSDMQQRADQLADES) form a disordered region. 2 consecutive t-SNARE coiled-coil homology domains span residues 19-81 (DQLA…LNDL) and 138-200 (DARE…ATKM).

Belongs to the SNAP-25 family.

It is found in the synapse. It localises to the synaptosome. The protein localises to the cell membrane. In terms of biological role, may play an important role in the synaptic function of specific neuronal systems. Associates with proteins involved in vesicle docking and membrane fusion. This chain is Synaptosomal-associated protein 25-A (snap25a), found in Carassius auratus (Goldfish).